A 29-amino-acid chain; its full sequence is Cyclotide mela-7 (29 aa).

The cyclopeptide (Gly-Asn) cross-link spans 1-29; the sequence is GLPTCGETCFKGKCYTPGCSCSYPICKKN. 3 disulfides stabilise this stretch: cysteine 5–cysteine 19, cysteine 9–cysteine 21, and cysteine 14–cysteine 26.

Post-translationally, this is a cyclic peptide. Contains 3 disulfide bonds.

Probably participates in a plant defense mechanism (Potential). Binds to and induces leakage in phospholipd membranes, particularly ones containing 1-palmitoyl-2-oleophosphatidylethanolamine (POPE). In vitro, displays cytotoxicity against cultured cells but no hemolytic activity towards fresh erythrocytes. Not active against Gram-negative bacterium E.coli ATCC 25922 or Gram-positive bacterium S.aureus ATCC 25923 up to a concentration of 64 uM. In Melicytus latifolius (Norfolk Island mahoe), this protein is Cyclotide mela-7.